The primary structure comprises 1644 residues: Peroxisome proliferator-activated receptor gamma coactivator-related protein 1 (1644 aa).

7 disordered regions span residues 1 to 61 (MAAR…DSSF), 170 to 249 (PERD…EVAG), 429 to 616 (LTPK…TSPV), 646 to 761 (AADP…PETP), 773 to 884 (SAPA…QPPG), 978 to 1074 (STVS…EGVV), and 1322 to 1507 (AAPP…NDHY). The span at 12–22 (APPPTGGPGPD) shows a compositional bias: pro residues. Positions 213–222 (SSPKLPSWRP) are enriched in low complexity. Ser-232 carries the post-translational modification Phosphoserine. The interval 425 to 460 (IMESLTPKEPQSLPASASQGSQKVPRKGRKKKNKEQ) is necessary for interaction with CREB1 and NRF1 and for transcriptional coactivation. Positions 437–446 (LPASASQGSQ) are enriched in polar residues. A compositionally biased stretch (basic residues) spans 448 to 457 (VPRKGRKKKN). The segment covering 475–496 (SSRGQSTVSAEVNSQAGSSQKQ) has biased composition (polar residues). Low complexity predominate over residues 515–524 (RAWARAWAAA). Ser-541 bears the Phosphoserine mark. The span at 556 to 572 (ETSQANPTLSLNDSAQA) shows a compositional bias: polar residues. Positions 691 to 702 (DHPKVVSPEGKD) are enriched in basic and acidic residues. The segment covering 811–821 (MVSTHSEQVSS) has biased composition (polar residues). 2 stretches are compositionally biased toward pro residues: residues 828-864 (VRPP…PLLP) and 874-884 (RLPPPPLQPPG). Phosphoserine occurs at positions 1059, 1393, and 1395. The tract at residues 1361–1432 (EASPCRSEMN…SSSSSVSSSS (72 aa)) is necessary for interaction with CREB1 and NRF1. Low complexity-rich tracts occupy residues 1409–1433 (SRSV…SSSR) and 1453–1489 (SSCS…VSPC). Residues 1523–1599 (RVVFIGKIPG…QPFDLCFGGR (77 aa)) enclose the RRM domain.

In terms of assembly, interacts with CREB1 and NRF1. As to expression, expressed in liver, heart, skeletal muscle, kidney and white and brown adipose tissues.

The protein resides in the nucleus. In terms of biological role, acts as a coactivator during transcriptional activation of nuclear genes related to mitochondrial biogenesis and cell growth. Involved in the transcription coactivation of CREB and NRF1 target genes. This chain is Peroxisome proliferator-activated receptor gamma coactivator-related protein 1 (Pprc1), found in Mus musculus (Mouse).